A 492-amino-acid chain; its full sequence is Glycosyltransferase alg8 (492 aa).

A run of 4 helical transmembrane segments spans residues 13-32 (GWLLFLSFLMLVAVALPPQV), 47-69 (IGVWRYSMGIIHFLRGMLFLYVV), 379-401 (LTVAIIGSIKYSIAIFIAYLLWV), and 421-443 (PAYPLILYYNQIVGAVVKIHVFF).

This sequence belongs to the glycosyltransferase 2 family.

Its subcellular location is the cell membrane. It participates in glycan biosynthesis; alginate biosynthesis. In terms of biological role, possibly a processive enzyme that polymerizes GDP-mannuronic acid. This chain is Glycosyltransferase alg8 (alg8), found in Azotobacter vinelandii.